The following is a 203-amino-acid chain: A-type ATP synthase subunit E (203 aa).

Belongs to the V-ATPase E subunit family. As to quaternary structure, has multiple subunits with at least A(3), B(3), C, D, E, F, H, I and proteolipid K(x).

It is found in the cell membrane. Its function is as follows. Component of the A-type ATP synthase that produces ATP from ADP in the presence of a proton gradient across the membrane. This is A-type ATP synthase subunit E from Thermococcus onnurineus (strain NA1).